A 518-amino-acid chain; its full sequence is Serine--tRNA ligase, mitochondrial (518 aa).

Residues methionine 1–phenylalanine 34 constitute a mitochondrion transit peptide. Lysine 110 bears the N6-acetyllysine mark. N6-succinyllysine is present on lysine 195. Position 299 to 301 (threonine 299 to glutamate 301) interacts with L-serine. ATP is bound at residue arginine 330–glutamate 332. An N6-succinyllysine modification is found at lysine 337. Valine 345 lines the ATP pocket. Residue glutamate 352 participates in L-serine binding. Glutamate 418–serine 421 lines the ATP pocket. Residue threonine 453 participates in L-serine binding. The disordered stretch occupies residues proline 497–arginine 518.

Belongs to the class-II aminoacyl-tRNA synthetase family. Type-1 seryl-tRNA synthetase subfamily. Homodimer. The tRNA molecule probably binds across the dimer. As to expression, ubiquitous.

The protein localises to the mitochondrion matrix. It carries out the reaction tRNA(Ser) + L-serine + ATP = L-seryl-tRNA(Ser) + AMP + diphosphate + H(+). It catalyses the reaction tRNA(Sec) + L-serine + ATP = L-seryl-tRNA(Sec) + AMP + diphosphate + H(+). It functions in the pathway aminoacyl-tRNA biosynthesis; selenocysteinyl-tRNA(Sec) biosynthesis; L-seryl-tRNA(Sec) from L-serine and tRNA(Sec): step 1/1. Its function is as follows. Catalyzes the attachment of serine to tRNA(Ser). Is also probably able to aminoacylate tRNA(Sec) with serine, to form the misacylated tRNA L-seryl-tRNA(Sec), which will be further converted into selenocysteinyl-tRNA(Sec). The polypeptide is Serine--tRNA ligase, mitochondrial (Sars2) (Mus musculus (Mouse)).